The chain runs to 112 residues: UPF0102 protein Cla_1413 (112 aa).

The protein belongs to the UPF0102 family.

In Campylobacter lari (strain RM2100 / D67 / ATCC BAA-1060), this protein is UPF0102 protein Cla_1413.